Reading from the N-terminus, the 133-residue chain is Large ribosomal subunit protein bL17 (133 aa).

Belongs to the bacterial ribosomal protein bL17 family. Part of the 50S ribosomal subunit. Contacts protein L32.

This is Large ribosomal subunit protein bL17 from Pseudoalteromonas translucida (strain TAC 125).